The following is a 435-amino-acid chain: UDP-N-acetylmuramoylalanine--D-glutamate ligase (435 aa).

114–120 provides a ligand contact to ATP; it reads GSNGKST.

This sequence belongs to the MurCDEF family.

The protein resides in the cytoplasm. The catalysed reaction is UDP-N-acetyl-alpha-D-muramoyl-L-alanine + D-glutamate + ATP = UDP-N-acetyl-alpha-D-muramoyl-L-alanyl-D-glutamate + ADP + phosphate + H(+). It functions in the pathway cell wall biogenesis; peptidoglycan biosynthesis. In terms of biological role, cell wall formation. Catalyzes the addition of glutamate to the nucleotide precursor UDP-N-acetylmuramoyl-L-alanine (UMA). The chain is UDP-N-acetylmuramoylalanine--D-glutamate ligase from Haemophilus ducreyi (strain 35000HP / ATCC 700724).